A 751-amino-acid polypeptide reads, in one-letter code: Cytosolic neutral trehalase (751 aa).

Residues 1 to 15 show a composition bias toward polar residues; it reads MDDSALPSNTSNGIN. Disordered regions lie at residues 1 to 42 and 64 to 88; these read MDDS…NPES and DFHE…NPRK. Positions 64–78 are enriched in basic and acidic residues; that stretch reads DFHEMLGDRNTRRGS. 5 residues coordinate Ca(2+): Asp-105, Asp-107, Asn-109, Gln-111, and Asp-116. Substrate-binding positions include Arg-292, 299-300, Asn-336, 345-347, Glu-412, Arg-461, and Gly-464; these read WD and RSQ. Active-site proton donor/acceptor residues include Asp-466 and Glu-670.

The protein belongs to the glycosyl hydrolase 37 family. Ca(2+) is required as a cofactor.

It is found in the cytoplasm. The enzyme catalyses alpha,alpha-trehalose + H2O = alpha-D-glucose + beta-D-glucose. Its pathway is carbohydrate degradation. Activated by calcium. Functionally, hydrolyzes intracellular trehalose to glucose. The disaccharide trehalose serves as a storage carbohydrate that is mobilized during conidial germination. Regulates the level of trehalose as a protectant for cell integrity during heat stress. This Emericella nidulans (strain FGSC A4 / ATCC 38163 / CBS 112.46 / NRRL 194 / M139) (Aspergillus nidulans) protein is Cytosolic neutral trehalase.